Consider the following 154-residue polypeptide: Putative esterase AF_2264 (154 aa).

This sequence belongs to the thioesterase PaaI family.

The sequence is that of Putative esterase AF_2264 from Archaeoglobus fulgidus (strain ATCC 49558 / DSM 4304 / JCM 9628 / NBRC 100126 / VC-16).